The primary structure comprises 541 residues: Protein yellow (541 aa).

The signal sequence occupies residues 1-21; it reads MFQDKGWVLLTLITLVSPSWA. N144 is a glycosylation site (N-linked (GlcNAc...) asparagine).

This sequence belongs to the major royal jelly protein family.

Its subcellular location is the secreted. Functionally, controls the pigmentation pattern of the adult cuticle and larval mouth parts. This Drosophila yakuba (Fruit fly) protein is Protein yellow (y).